The sequence spans 224 residues: Probable amino-acid permease protein YxeN (224 aa).

A run of 6 helical transmembrane segments spans residues 3–23 (TIDW…LPIT), 24–44 (LFMA…LALI), 58–78 (LYIS…IYYG), 91–111 (ALTA…AEIF), 157–177 (FIGL…EMFA), and 190–210 (FETY…YSIL). Residues 20-211 (LPITLFMAIA…VLTIIYSILQ (192 aa)) form the ABC transmembrane type-1 domain.

This sequence belongs to the binding-protein-dependent transport system permease family. The complex is composed of two ATP-binding proteins (YxeO), two transmembrane proteins (YxeN) and a solute-binding protein (YxeM).

It localises to the cell membrane. Its function is as follows. Probably part of the ABC transporter complex YxeMNO that could be involved in amino-acid import. May transport S-methylcysteine. Probably responsible for the translocation of the substrate across the membrane. In Bacillus subtilis (strain 168), this protein is Probable amino-acid permease protein YxeN (yxeN).